The chain runs to 280 residues: Polyamine aminopropyltransferase 2 (280 aa).

A PABS domain is found at 2-237 (ELWLDEALEL…GIIGFTYCSK (236 aa)). Gln-33 lines the S-methyl-5'-thioadenosine pocket. Spermidine contacts are provided by His-64 and Asp-88. S-methyl-5'-thioadenosine contacts are provided by residues Glu-108 and 139 to 140 (DG). Catalysis depends on Asp-157, which acts as the Proton acceptor. A spermidine-binding site is contributed by 157-160 (DSSD). Pro-164 provides a ligand contact to S-methyl-5'-thioadenosine.

It belongs to the spermidine/spermine synthase family. As to quaternary structure, homodimer or homotetramer.

The protein resides in the cytoplasm. The catalysed reaction is S-adenosyl 3-(methylsulfanyl)propylamine + putrescine = S-methyl-5'-thioadenosine + spermidine + H(+). Its pathway is amine and polyamine biosynthesis; spermidine biosynthesis; spermidine from putrescine: step 1/1. In terms of biological role, catalyzes the irreversible transfer of a propylamine group from the amino donor S-adenosylmethioninamine (decarboxy-AdoMet) to putrescine (1,4-diaminobutane) to yield spermidine. This chain is Polyamine aminopropyltransferase 2, found in Leptospira interrogans serogroup Icterohaemorrhagiae serovar Lai (strain 56601).